A 217-amino-acid chain; its full sequence is Guanylate kinase (217 aa).

The Guanylate kinase-like domain maps to 15–194; sequence GLMLVLSSPS…AYQRLKRILL (180 aa). 22-29 is a binding site for ATP; it reads SPSGAGKT.

Belongs to the guanylate kinase family.

Its subcellular location is the cytoplasm. It catalyses the reaction GMP + ATP = GDP + ADP. Functionally, essential for recycling GMP and indirectly, cGMP. The sequence is that of Guanylate kinase from Hyphomonas neptunium (strain ATCC 15444).